The chain runs to 286 residues: Ribosomal RNA small subunit methyltransferase H (286 aa).

Residues 17–19 (AGH), aspartate 36, phenylalanine 63, aspartate 84, and glutamine 91 each bind S-adenosyl-L-methionine.

The protein belongs to the methyltransferase superfamily. RsmH family.

It localises to the cytoplasm. It catalyses the reaction cytidine(1402) in 16S rRNA + S-adenosyl-L-methionine = N(4)-methylcytidine(1402) in 16S rRNA + S-adenosyl-L-homocysteine + H(+). Its function is as follows. Specifically methylates the N4 position of cytidine in position 1402 (C1402) of 16S rRNA. The protein is Ribosomal RNA small subunit methyltransferase H of Metamycoplasma arthritidis (strain 158L3-1) (Mycoplasma arthritidis).